The following is a 210-amino-acid chain: Redox-sensing transcriptional repressor Rex (210 aa).

A DNA-binding region (H-T-H motif) is located at residues 16–55 (IYMRTLQELLEDDVDVISSERLAKQCGVNPAQIRKDLAYF). 90-95 (GLGNLG) contributes to the NAD(+) binding site.

It belongs to the transcriptional regulatory Rex family. In terms of assembly, homodimer.

Its subcellular location is the cytoplasm. Functionally, modulates transcription in response to changes in cellular NADH/NAD(+) redox state. In Syntrophobacter fumaroxidans (strain DSM 10017 / MPOB), this protein is Redox-sensing transcriptional repressor Rex.